Consider the following 462-residue polypeptide: Bindin (462 aa).

The first 19 residues, 1 to 19 (MARQLSVILVALTLTTALA), serve as a signal peptide directing secretion. Residues 20–244 (ENFPTRTSAP…DSGRSARKKR (225 aa)) constitute a propeptide that is removed on maturation. Disordered regions lie at residues 155–194 (DDRR…APKD) and 221–278 (RTRR…QGMG). Residues 372-380 (LRHLRHHSN) are fucose-binding domain.

This sequence belongs to the bindin family.

Its subcellular location is the cytoplasmic vesicle. The protein localises to the secretory vesicle. It localises to the acrosome lumen. Functionally, species-specific sea urchin sperm protein required for adhesion of sperm to the egg surface during fertilization. Bindin coats the acrosomal process after it is externalized by the acrosome reaction. It binds to sulfated, fucose-containing polysaccharides on the vitelline layer receptor proteoglycans which cover the egg plasma membrane. This is Bindin from Lytechinus variegatus (Green sea urchin).